Consider the following 93-residue polypeptide: YcgL domain-containing protein VSAL_I1068 (93 aa).

Residues 1-84 (MYCSIYKSSK…PPENLLEKYK (84 aa)) form the YcgL domain.

In Aliivibrio salmonicida (strain LFI1238) (Vibrio salmonicida (strain LFI1238)), this protein is YcgL domain-containing protein VSAL_I1068.